Reading from the N-terminus, the 252-residue chain is Triosephosphate isomerase (252 aa).

10–12 is a substrate binding site; sequence NWK. Histidine 96 functions as the Electrophile in the catalytic mechanism. Glutamate 168 acts as the Proton acceptor in catalysis. Substrate-binding positions include glycine 174, serine 213, and 234 to 235; that span reads GG.

It belongs to the triosephosphate isomerase family. As to quaternary structure, homodimer.

The protein resides in the cytoplasm. The enzyme catalyses D-glyceraldehyde 3-phosphate = dihydroxyacetone phosphate. The protein operates within carbohydrate biosynthesis; gluconeogenesis. It participates in carbohydrate degradation; glycolysis; D-glyceraldehyde 3-phosphate from glycerone phosphate: step 1/1. Involved in the gluconeogenesis. Catalyzes stereospecifically the conversion of dihydroxyacetone phosphate (DHAP) to D-glyceraldehyde-3-phosphate (G3P). The protein is Triosephosphate isomerase of Nitrosomonas eutropha (strain DSM 101675 / C91 / Nm57).